A 489-amino-acid polypeptide reads, in one-letter code: Corticosteroid-binding protein (489 aa).

To yeast FMS1.

May be a flavoprotein with enzymatic activity. The protein is Corticosteroid-binding protein (CBP1) of Candida albicans (strain SC5314 / ATCC MYA-2876) (Yeast).